The following is a 90-amino-acid chain: Guanine nucleotide-binding protein subunit gamma (90 aa).

Cysteine 86 carries S-palmitoyl cysteine lipidation. Cysteine 87 carries the post-translational modification Cysteine methyl ester. Cysteine 87 carries S-farnesyl cysteine lipidation. The propeptide at 88 to 90 (CIM) is removed in mature form.

It belongs to the G protein gamma family. As to quaternary structure, g proteins are composed of 3 units, alpha, beta and gamma.

The protein resides in the membrane. This Eremothecium gossypii (strain ATCC 10895 / CBS 109.51 / FGSC 9923 / NRRL Y-1056) (Yeast) protein is Guanine nucleotide-binding protein subunit gamma.